The primary structure comprises 98 residues: Integration host factor subunit alpha (98 aa).

The interval 49–72 is disordered; it reads FGNFDLRDKNQRPGRNPKTGEDIP.

This sequence belongs to the bacterial histone-like protein family. Heterodimer of an alpha and a beta chain.

Its function is as follows. This protein is one of the two subunits of integration host factor, a specific DNA-binding protein that functions in genetic recombination as well as in transcriptional and translational control. This is Integration host factor subunit alpha from Shewanella loihica (strain ATCC BAA-1088 / PV-4).